Reading from the N-terminus, the 624-residue chain is Kelch-like protein diablo (624 aa).

Low complexity predominate over residues 1-21 (MGDPLLPGSTGLGSGPAAAAT). A disordered region spans residues 1 to 55 (MGDPLLPGSTGLGSGPAAAATGGSGTTGTGLGSGGTSGAERPPSPARLTHTSEKH). A compositionally biased stretch (gly residues) spans 22–37 (GGSGTTGTGLGSGGTS). One can recognise a BTB domain in the interval 73-140 (CDVVLNVGGR…CYTAHIIVEE (68 aa)). One can recognise a BACK domain in the interval 175–277 (CLGIRAFADT…SPKFLVGTVG (103 aa)). 6 Kelch repeats span residues 324-370 (VLFA…VLND), 372-418 (LYAV…VLDG), 419-465 (FLYA…VLSG), 467-512 (LYAI…VFNN), 514-559 (IYAV…VVNG), and 560-606 (QLYA…VMRA).

It functions in the pathway protein modification; protein ubiquitination. In terms of biological role, probable substrate-specific adapter of an E3 ubiquitin-protein ligase complex which mediates the ubiquitination and subsequent proteasomal degradation of target proteins. May have a role in synapse differentiation and growth. The polypeptide is Kelch-like protein diablo (Drosophila virilis (Fruit fly)).